Reading from the N-terminus, the 243-residue chain is tRNA pseudouridine synthase A (243 aa).

D53 acts as the Nucleophile in catalysis. Y111 is a substrate binding site.

Belongs to the tRNA pseudouridine synthase TruA family. As to quaternary structure, homodimer.

The enzyme catalyses uridine(38/39/40) in tRNA = pseudouridine(38/39/40) in tRNA. In terms of biological role, formation of pseudouridine at positions 38, 39 and 40 in the anticodon stem and loop of transfer RNAs. This is tRNA pseudouridine synthase A from Chlorobium chlorochromatii (strain CaD3).